Here is a 376-residue protein sequence, read N- to C-terminus: Queuine tRNA-ribosyltransferase (376 aa).

Asp-89 acts as the Proton acceptor in catalysis. Residues 89-93 (DSGGF), Asp-143, Gln-194, and Gly-221 contribute to the substrate site. An RNA binding region spans residues 252 to 258 (GVGIPSN). Asp-271 (nucleophile) is an active-site residue. Residues 276 to 280 (ARNGR) form an RNA binding; important for wobble base 34 recognition region. Positions 309, 311, 314, and 340 each coordinate Zn(2+).

This sequence belongs to the queuine tRNA-ribosyltransferase family. In terms of assembly, homodimer. Within each dimer, one monomer is responsible for RNA recognition and catalysis, while the other monomer binds to the replacement base PreQ1. Zn(2+) serves as cofactor.

It catalyses the reaction 7-aminomethyl-7-carbaguanine + guanosine(34) in tRNA = 7-aminomethyl-7-carbaguanosine(34) in tRNA + guanine. The protein operates within tRNA modification; tRNA-queuosine biosynthesis. Functionally, catalyzes the base-exchange of a guanine (G) residue with the queuine precursor 7-aminomethyl-7-deazaguanine (PreQ1) at position 34 (anticodon wobble position) in tRNAs with GU(N) anticodons (tRNA-Asp, -Asn, -His and -Tyr). Catalysis occurs through a double-displacement mechanism. The nucleophile active site attacks the C1' of nucleotide 34 to detach the guanine base from the RNA, forming a covalent enzyme-RNA intermediate. The proton acceptor active site deprotonates the incoming PreQ1, allowing a nucleophilic attack on the C1' of the ribose to form the product. After dissociation, two additional enzymatic reactions on the tRNA convert PreQ1 to queuine (Q), resulting in the hypermodified nucleoside queuosine (7-(((4,5-cis-dihydroxy-2-cyclopenten-1-yl)amino)methyl)-7-deazaguanosine). The protein is Queuine tRNA-ribosyltransferase of Clostridium botulinum (strain Hall / ATCC 3502 / NCTC 13319 / Type A).